The primary structure comprises 395 residues: Enoyl-[acyl-carrier-protein] reductase [NADH] (395 aa).

Residues 48–53 (GASTGY), 74–75 (FE), 111–112 (DA), and 139–140 (LA) contribute to the NAD(+) site. A substrate-binding site is contributed by Tyr-225. Tyr-235 (proton donor) is an active-site residue. Residues Lys-244 and 273 to 275 (LVT) each bind NAD(+).

It belongs to the TER reductase family. As to quaternary structure, monomer.

It catalyses the reaction a 2,3-saturated acyl-[ACP] + NAD(+) = a (2E)-enoyl-[ACP] + NADH + H(+). It functions in the pathway lipid metabolism; fatty acid biosynthesis. Functionally, involved in the final reduction of the elongation cycle of fatty acid synthesis (FAS II). Catalyzes the reduction of a carbon-carbon double bond in an enoyl moiety that is covalently linked to an acyl carrier protein (ACP). In Saccharophagus degradans (strain 2-40 / ATCC 43961 / DSM 17024), this protein is Enoyl-[acyl-carrier-protein] reductase [NADH].